The primary structure comprises 110 residues: Inner membrane protein YgiZ (110 aa).

Residues 1–8 (MLKQKIKT) are Cytoplasmic-facing. The helical transmembrane segment at 9 to 29 (IFEALLYIMLTYWLIDSFFAF) threads the bilayer. Residues 30–53 (NKYDWMLESGGNICSIPSVSGEDR) lie on the Periplasmic side of the membrane. A helical transmembrane segment spans residues 54–74 (ILQAMIAAFFLLTPLIILILR). Topologically, residues 75-83 (KLFMREMFE) are cytoplasmic. A helical transmembrane segment spans residues 84–104 (FWVYVFSLGICLVCGWWLFWG). Residues 105 to 110 (RFIFCY) are Periplasmic-facing.

It localises to the cell inner membrane. The polypeptide is Inner membrane protein YgiZ (ygiZ) (Escherichia coli (strain K12)).